The primary structure comprises 116 residues: Iron-sulfur cluster insertion protein ErpA (116 aa).

Iron-sulfur cluster is bound by residues C44, C108, and C110.

Belongs to the HesB/IscA family. As to quaternary structure, homodimer. Requires iron-sulfur cluster as cofactor.

Its function is as follows. Required for insertion of 4Fe-4S clusters for at least IspG. The chain is Iron-sulfur cluster insertion protein ErpA from Shewanella loihica (strain ATCC BAA-1088 / PV-4).